A 122-amino-acid polypeptide reads, in one-letter code: UPF0102 protein RHE_CH00320 (122 aa).

Belongs to the UPF0102 family.

This Rhizobium etli (strain ATCC 51251 / DSM 11541 / JCM 21823 / NBRC 15573 / CFN 42) protein is UPF0102 protein RHE_CH00320.